Consider the following 211-residue polypeptide: Large ribosomal subunit protein bL25 (211 aa).

The segment covering 1–18 (MAKTHEIKAERRADEGKG) has biased composition (basic and acidic residues). Positions 1 to 20 (MAKTHEIKAERRADEGKGAS) are disordered.

The protein belongs to the bacterial ribosomal protein bL25 family. CTC subfamily. Part of the 50S ribosomal subunit; part of the 5S rRNA/L5/L18/L25 subcomplex. Contacts the 5S rRNA. Binds to the 5S rRNA independently of L5 and L18.

Functionally, this is one of the proteins that binds to the 5S RNA in the ribosome where it forms part of the central protuberance. In Xanthomonas oryzae pv. oryzae (strain MAFF 311018), this protein is Large ribosomal subunit protein bL25.